The primary structure comprises 332 residues: Glycerol-3-phosphate dehydrogenase [NAD(P)+] (332 aa).

NADPH contacts are provided by S11, F12, K32, and K106. Positions 106, 137, and 139 each coordinate sn-glycerol 3-phosphate. Residue A141 coordinates NADPH. The sn-glycerol 3-phosphate site is built by K192, D245, S255, R256, and N257. Catalysis depends on K192, which acts as the Proton acceptor. Residue R256 participates in NADPH binding. V280 and E282 together coordinate NADPH.

This sequence belongs to the NAD-dependent glycerol-3-phosphate dehydrogenase family.

It localises to the cytoplasm. The enzyme catalyses sn-glycerol 3-phosphate + NAD(+) = dihydroxyacetone phosphate + NADH + H(+). It carries out the reaction sn-glycerol 3-phosphate + NADP(+) = dihydroxyacetone phosphate + NADPH + H(+). It participates in membrane lipid metabolism; glycerophospholipid metabolism. In terms of biological role, catalyzes the reduction of the glycolytic intermediate dihydroxyacetone phosphate (DHAP) to sn-glycerol 3-phosphate (G3P), the key precursor for phospholipid synthesis. The chain is Glycerol-3-phosphate dehydrogenase [NAD(P)+] from Staphylococcus aureus (strain bovine RF122 / ET3-1).